A 302-amino-acid chain; its full sequence is Sulfate adenylyltransferase subunit 2 (302 aa).

Positions 280–302 are disordered; that stretch reads RQGRAIDHDQSGSMELKKRQGYF.

Belongs to the PAPS reductase family. CysD subfamily. As to quaternary structure, heterodimer composed of CysD, the smaller subunit, and CysN.

It carries out the reaction sulfate + ATP + H(+) = adenosine 5'-phosphosulfate + diphosphate. It participates in sulfur metabolism; hydrogen sulfide biosynthesis; sulfite from sulfate: step 1/3. In terms of biological role, with CysN forms the ATP sulfurylase (ATPS) that catalyzes the adenylation of sulfate producing adenosine 5'-phosphosulfate (APS) and diphosphate, the first enzymatic step in sulfur assimilation pathway. APS synthesis involves the formation of a high-energy phosphoric-sulfuric acid anhydride bond driven by GTP hydrolysis by CysN coupled to ATP hydrolysis by CysD. The polypeptide is Sulfate adenylyltransferase subunit 2 (Vibrio parahaemolyticus serotype O3:K6 (strain RIMD 2210633)).